We begin with the raw amino-acid sequence, 176 residues long: dCTP deaminase (176 aa).

DCTP contacts are provided by residues 102–107 (RSTFAR) and aspartate 118. Residue glutamate 128 is the Proton donor/acceptor of the active site. Residues tyrosine 160, lysine 166, and glutamine 167 each contribute to the dCTP site.

Belongs to the dCTP deaminase family. Homotrimer.

It catalyses the reaction dCTP + H2O + H(+) = dUTP + NH4(+). It functions in the pathway pyrimidine metabolism; dUMP biosynthesis; dUMP from dCTP (dUTP route): step 1/2. Its function is as follows. Catalyzes the deamination of dCTP to dUTP. The chain is dCTP deaminase from Staphylothermus marinus (strain ATCC 43588 / DSM 3639 / JCM 9404 / F1).